Consider the following 113-residue polypeptide: Dynein light chain Tctex-type 1 (113 aa).

Met-1 carries the post-translational modification N-acetylmethionine. Residues 41-113 (QWTTNVVEQT…CIVSAFGLSI (73 aa)) are interaction with GNB1.

The protein belongs to the dynein light chain Tctex-type family. In terms of assembly, homodimer. The cytoplasmic dynein 1 complex consists of two catalytic heavy chains (HCs) and a number of non-catalytic subunits presented by intermediate chains (ICs), light intermediate chains (LICs) and light chains (LCs); the composition seems to vary in respect to the IC, LIC and LC composition. The heavy chain homodimer serves as a scaffold for the probable homodimeric assembly of the respective non-catalytic subunits. The ICs and LICs bind directly to the HC dimer and dynein LCs assemble on the IC dimer. DYNLT1 and DYNLT3 compete for association with dynein IC (DYNC1I1 or DYNC1I2). Self-associates. Interacts with RHO. Interacts with DYNC1I1 and DYNC1I2. Interacts with DOC2A, DOC2B and SCN10A. Interacts with PVR. Interacts with SVIL isoform 2. Interacts with GNB1; the interaction occurs in presence of guanine nucleotide-binding protein G(T) subunit gamma; the interaction diminishes the association of DYNLT1 with dynein IC (DYNC1I1 or DYNC1I2). Interacts with GNB2, GNB3 and GNB5; the interactions occur in presence of guanine nucleotide-binding protein G(T) subunit gamma. Interacts with ACVR2B and ARHGEF2. Interacts with DNAI4. Interacts with CFAP61. In terms of processing, phosphorylated by BMPR2. The phosphorylation status is proposed to regulate the association with the cytoplasmic dynein complex and may have role in cytoplasmic dynein cargo release.

The protein resides in the golgi apparatus. It is found in the cytoplasm. It localises to the cytoskeleton. The protein localises to the spindle. Functionally, acts as one of several non-catalytic accessory components of the cytoplasmic dynein 1 complex that are thought to be involved in linking dynein to cargos and to adapter proteins that regulate dynein function. Cytoplasmic dynein 1 acts as a motor for the intracellular retrograde motility of vesicles and organelles along microtubules. Binds to transport cargos and is involved in apical cargo transport such as rhodopsin-bearing vesicles in polarized epithelia. Is involved in intracellular targeting of D-type retrovirus gag polyproteins to the cytoplasmic assembly site. May also be a accessory component of axonemal dynein. In terms of biological role, plays a role in neuronal morphogenesis; the function is independent of cytoplasmic dynein and seems to be coupled to regulation of the actin cytoskeleton by enhancing Rac1 activity. Required for neurite outgrowth. The function in neurogenesis may be regulated by association with a G-protein beta-gamma dimer. May function as a receptor-independent activator of heterotrimeric G-protein signaling; the activation appears to be independent of a nucleotide exchange. Plays a role in regulating neurogenesis; inhibits the genesis of neurons from precursor cells during cortical development presumably by antagonizing ARHGEF2. Unrelated to the role in retrograde microtubule-associated movement may play a role in the dimerization of cytoplasmic proteins/domains such as for ACVR2B. Binds to the cytoplasmic domain of ACVR2B and, in vitro, inhibits ACVR2B signaling. Involved in the regulation of mitotic spindle orientation. This chain is Dynein light chain Tctex-type 1 (Dynlt1), found in Rattus norvegicus (Rat).